The primary structure comprises 533 residues: MQNPSTVTQESAAPVFDFFPRLRGLTSRNRSPCSNSDGYALSSSNALYFNGFRTLPSRRMGKTLASLSFNTKSSAGSSLRRFISDFNSFIRFHCDKVVPESFASVGGVGLSSDENGIRENGTGGVLGEEGLPLNGVEADRPKKVLILMSDTGGGHRASAEAIRAAFNQEFGDEYQVFITDLWTDHTPWPFNQLPRSYNFLVKHGTLWKMTYYGTSPRIVHQSNFAATSTFIAREIAQGLMKYQPDIIISVHPLMQHVPLRVLRSKGLLKKIVFTTVITDLSTCHPTWFHKLVTRCYCPSTEVAKRAQKAGLETSQIKVYGLPVRPSFVKPVRPKVELRRELGMDENLPAVLLMGGGEGMGPIEATARALADALYDKNLGEAVGQVLIICGRNKKLQSKLSSLDWKIPVQVKGFITKMEECMGACDCIITKAGPGTIAEAMIRGLPIILNGYIAGQEAGNVPYVVENGCGKFSKSPKEISKIVADWFGPASKELEIMSQNALRLAKPEAVFKIVHDMHELVRKKNSLPQLSCTA.

2 residues coordinate a 1,2-diacyl-sn-glycero-3-phospho-(1'-sn-glycerol): H155 and P189. Position 155 (H155) interacts with UDP. Residues 192–215 (QLPRSYNFLVKHGTLWKMTYYGTS) are required for binding to diacyl glycerol. UDP is bound by residues R324, F413, I414, 434–438 (GTIAE), and E456.

It belongs to the glycosyltransferase 28 family. As to quaternary structure, homodimer. In terms of tissue distribution, expressed in roots, stems, leaves, flowers, siliques and seeds.

It is found in the plastid. It localises to the chloroplast inner membrane. The enzyme catalyses a 1,2-diacyl-sn-glycerol + UDP-alpha-D-galactose = a 1,2-diacyl-3-O-(beta-D-galactosyl)-sn-glycerol + UDP + H(+). It catalyses the reaction 1,2-di-(9Z,12Z-octadecadienoyl)-sn-glycerol + UDP-alpha-D-galactose = 1,2-di-(9Z,12Z-octadecadienoyl)-3-beta-D-galactosyl-sn-glycerol + UDP + H(+). The catalysed reaction is 1-(9Z-octadecenoyl)-2-hexadecanoyl-sn-glycerol + UDP-alpha-D-galactose = 1-(9Z-octadecenoyl)-2-hexadecanoyl-3-beta-D-galactosyl-sn-glycerol + UDP + H(+). It carries out the reaction 1,2-di-(9Z-octadecenoyl)-sn-glycerol + UDP-alpha-D-galactose = 1,2-di-(9Z-octadecenoyl)-3-beta-D-galactosyl-sn-glycerol + UDP + H(+). With respect to regulation, activated by phosphatidate (PA) and phosphatidylglycerol (PG). Inhibited by galvestine-1. Involved in the synthesis of the major structural component of photosynthetic membranes. Required for proper thylakoid membrane biogenesis. Does not discriminate between prokaryotic (18:1/16:0) or eukaryotic (18:2/18:2) 1,2-diacylglycerol species, but operates with some preference for the prokaryotic one. Is responsible for most galactolipid synthesis in chloroplasts. Required for the formation of thylakoid membranes and functional photosynthetic electron transport during cotyledons greening in young seedlings. May link galactolipid synthesis with the coordinated transcriptional regulation of chloroplasts and other organelles during cotyledon greening. This Arabidopsis thaliana (Mouse-ear cress) protein is Monogalactosyldiacylglycerol synthase 1, chloroplastic.